The primary structure comprises 245 residues: Uridylate kinase (245 aa).

16–19 provides a ligand contact to ATP; that stretch reads KLSG. Gly-58 contributes to the UMP binding site. The ATP site is built by Gly-59 and Arg-63. Residues Asp-78 and 139 to 146 contribute to the UMP site; that span reads TGNPFFTT. ATP-binding residues include Thr-166, Tyr-172, and Asp-175.

Belongs to the UMP kinase family. As to quaternary structure, homohexamer.

The protein localises to the cytoplasm. The catalysed reaction is UMP + ATP = UDP + ADP. The protein operates within pyrimidine metabolism; CTP biosynthesis via de novo pathway; UDP from UMP (UMPK route): step 1/1. Inhibited by UTP. In terms of biological role, catalyzes the reversible phosphorylation of UMP to UDP. The polypeptide is Uridylate kinase (Idiomarina loihiensis (strain ATCC BAA-735 / DSM 15497 / L2-TR)).